The sequence spans 93 residues: Small ribosomal subunit protein uS19c (93 aa).

It belongs to the universal ribosomal protein uS19 family.

It is found in the plastid. It localises to the chloroplast. Protein S19 forms a complex with S13 that binds strongly to the 16S ribosomal RNA. The chain is Small ribosomal subunit protein uS19c from Stigeoclonium helveticum (Green alga).